The following is a 230-amino-acid chain: Lecithin retinol acyltransferase (230 aa).

Over 1–194 the chain is Cytoplasmic; it reads MKNPMLEVVS…VKIIIRDQRS (194 aa). An LRAT domain is found at 50 to 177; that stretch reads VLEVPRTHLT…CRYGTPISPQ (128 aa). Catalysis depends on residues H60 and H72. C161 (acyl-thioester intermediate) is an active-site residue. A helical transmembrane segment spans residues 195 to 215; that stretch reads VLASAVLGLASIVCTGLVSYT. Residues 216-230 are Lumenal-facing; the sequence is TLPAIFIPFFLWMAG.

This sequence belongs to the H-rev107 family. As to expression, hepatic stellate cells and endothelial cells (at protein level). Found at high levels in testis and liver, followed by retinal pigment epithelium, small intestine, prostate, pancreas and colon. Low expression observed in brain. In fetal tissues, expressed in retinal pigment epithelium and liver, and barely in the brain.

Its subcellular location is the endoplasmic reticulum membrane. It localises to the rough endoplasmic reticulum. The protein localises to the endosome. It is found in the multivesicular body. The protein resides in the cytoplasm. Its subcellular location is the perinuclear region. The enzyme catalyses all-trans-retinol--[retinol-binding protein] + a 1,2-diacyl-sn-glycero-3-phosphocholine = apo--[retinol-binding protein] + an all-trans-retinyl ester + a 2-acyl-sn-glycero-3-phosphocholine. The catalysed reaction is 1,2-dihexadecanoyl-sn-glycero-3-phosphocholine + all-trans-retinol = all-trans-retinyl hexadecanoate + 2-hexadecanoyl-sn-glycero-3-phosphocholine. It carries out the reaction 1,2-diheptanoyl-sn-glycero-3-phosphocholine + all-trans-retinol--[retinol-binding protein] = all-trans-retinyl heptanoate + 2-heptanoyl-sn-glycero-3-phosphocholine + apo--[retinol-binding protein]. It catalyses the reaction 1,2-dioctanoyl-sn-glycero-3-phosphocholine + all-trans-retinol--[retinol-binding protein] = 2-octanoyl-sn-glycero-3-phosphocholine + all-trans-retinyl octanoate + apo--[retinol-binding protein]. The enzyme catalyses all-trans-retinol--[retinol-binding protein] + 1,2-dihexadecanoyl-sn-glycero-3-phosphocholine = apo--[retinol-binding protein] + all-trans-retinyl hexadecanoate + 2-hexadecanoyl-sn-glycero-3-phosphocholine. The catalysed reaction is 1,2-didodecanoyl-sn-glycero-3-phosphocholine + all-trans-retinol--[retinol-binding protein] = 2-dodecanoyl-sn-glycero-3-phosphocholine + all-trans-retinyl dodecanoate + apo--[retinol-binding protein]. It functions in the pathway cofactor metabolism; retinol metabolism. With respect to regulation, inhibited by all-trans-retinyl alpha-bromoacetate and N-boc-L-biocytinyl-11-aminoundecane chloro-methyl ketone (BACMK). Functionally, transfers the acyl group from the sn-1 position of phosphatidylcholine to all-trans retinol, producing all-trans retinyl esters. Retinyl esters are storage forms of vitamin A. LRAT plays a critical role in vision. It provides the all-trans retinyl ester substrates for the isomerohydrolase which processes the esters into 11-cis-retinol in the retinal pigment epithelium; due to a membrane-associated alcohol dehydrogenase, 11 cis-retinol is oxidized and converted into 11-cis-retinaldehyde which is the chromophore for rhodopsin and the cone photopigments. Required for the survival of cone photoreceptors and correct rod photoreceptor cell morphology. This Homo sapiens (Human) protein is Lecithin retinol acyltransferase.